Consider the following 391-residue polypeptide: Geranylgeranyl diphosphate reductase (391 aa).

This sequence belongs to the geranylgeranyl reductase family. ChlP subfamily.

The catalysed reaction is phytyl diphosphate + 3 NADP(+) = geranylgeranyl diphosphate + 3 NADPH + 3 H(+). The protein operates within porphyrin-containing compound metabolism; bacteriochlorophyll biosynthesis (light-independent). In terms of biological role, catalyzes the stepwise hydrogenation of geranylgeraniol to phytol during bacteriochlorophyll A (BchlA) biosynthesis. The protein is Geranylgeranyl diphosphate reductase (bchP) of Rhodobacter capsulatus (strain ATCC BAA-309 / NBRC 16581 / SB1003).